A 206-amino-acid chain; its full sequence is UPF0328 protein ECU01_0050/ECU01_1560 (206 aa).

Disordered regions lie at residues 1–153 and 179–206; these read MPRP…HSHT and GRLH…LATL. Basic and acidic residues predominate over residues 74–96; that stretch reads HTEGCHTHEANPEPNTKHTETES. Polar residues-rich tracts occupy residues 97 to 120 and 132 to 148; these read PKPQ…SQNT and SRPS…QSPH.

This sequence belongs to the UPF0328 family.

The protein is UPF0328 protein ECU01_0050/ECU01_1560 of Encephalitozoon cuniculi (strain GB-M1) (Microsporidian parasite).